The following is a 277-amino-acid chain: GATA transcription factor 15 (277 aa).

The disordered stretch occupies residues 52 to 94; sequence AYDDHSTVTTSPSSPSSSSTGSVDCTLSLGTPSSRRAEPVAAA. Low complexity predominate over residues 58 to 74; it reads TVTTSPSSPSSSSTGSV. The GATA-type zinc finger occupies 154-179; that stretch reads CANCGTASTPLWRNGPRGPKSLCNAC.

Belongs to the type IV zinc-finger family. Class B subfamily.

Functionally, probable transcription factor that regulates organogenesis during transition from the vegetative to the reproductive phase. Regulates the expression of CYP78A11/PLA1, HD3A and MADS1 during reproductive development in rice. May act upstream of CYP78A11/PLA1 during panicle development. Acts independently of the photoperiodic and gibberellin signaling pathways. The sequence is that of GATA transcription factor 15 from Oryza sativa subsp. indica (Rice).